A 237-amino-acid chain; its full sequence is Regulator of G-protein signaling 9-binding protein (237 aa).

The Cytoplasmic segment spans residues methionine 1–lysine 212. The stretch at serine 30–threonine 54 forms a coiled coil. Residues glutamate 153–glutamate 202 are SNARE-like. The helical; Anchor for type IV membrane protein transmembrane segment at alanine 213–valine 233 threads the bilayer. Residues alanine 234–serine 237 are Extracellular-facing.

It belongs to the RGS7BP/RGS9BP family. As to quaternary structure, specifically interacts with isoform RGS9-1 of RGS9. Interaction is decreased when RGS9-1 is phosphorylated at 'Ser-475'. Component of the RGS9-1-Gbeta5 complex composed of RGS9-1, Gbeta5 (GNB5) and RGS9BP. Predominantly expressed in photoreceptors of the retina. Weakly expressed in other areas of the central nervous system.

It is found in the membrane. Its function is as follows. Regulator of G protein-coupled receptor (GPCR) signaling in phototransduction. Participates in the recovery phase of visual transduction via its interaction with RGS9-1 isoform. Acts as a membrane-anchor that mediates the targeting of RGS9-1 to the photoreceptor outer segment, where phototransduction takes place. Enhances the ability of RGS9-1 to stimulate G protein GTPase activity, allowing the visual signal to be terminated on the physiologically time scale. It also controls the proteolytic stability of RGS9-1, probably by protecting it from degradation. This chain is Regulator of G-protein signaling 9-binding protein (Rgs9bp), found in Mus musculus (Mouse).